Here is a 380-residue protein sequence, read N- to C-terminus: Queuine tRNA-ribosyltransferase (380 aa).

The active-site Proton acceptor is Asp96. Residues Asp96–Phe100, Asp150, Gln193, and Gly220 each bind substrate. The RNA binding stretch occupies residues Gly251–Ser257. Asp270 (nucleophile) is an active-site residue. The tract at residues Thr275–Arg279 is RNA binding; important for wobble base 34 recognition. Residues Cys308, Cys310, Cys313, and His339 each coordinate Zn(2+).

The protein belongs to the queuine tRNA-ribosyltransferase family. As to quaternary structure, homodimer. Within each dimer, one monomer is responsible for RNA recognition and catalysis, while the other monomer binds to the replacement base PreQ1. Zn(2+) serves as cofactor.

The enzyme catalyses 7-aminomethyl-7-carbaguanine + guanosine(34) in tRNA = 7-aminomethyl-7-carbaguanosine(34) in tRNA + guanine. The protein operates within tRNA modification; tRNA-queuosine biosynthesis. In terms of biological role, catalyzes the base-exchange of a guanine (G) residue with the queuine precursor 7-aminomethyl-7-deazaguanine (PreQ1) at position 34 (anticodon wobble position) in tRNAs with GU(N) anticodons (tRNA-Asp, -Asn, -His and -Tyr). Catalysis occurs through a double-displacement mechanism. The nucleophile active site attacks the C1' of nucleotide 34 to detach the guanine base from the RNA, forming a covalent enzyme-RNA intermediate. The proton acceptor active site deprotonates the incoming PreQ1, allowing a nucleophilic attack on the C1' of the ribose to form the product. After dissociation, two additional enzymatic reactions on the tRNA convert PreQ1 to queuine (Q), resulting in the hypermodified nucleoside queuosine (7-(((4,5-cis-dihydroxy-2-cyclopenten-1-yl)amino)methyl)-7-deazaguanosine). The chain is Queuine tRNA-ribosyltransferase from Streptococcus thermophilus (strain ATCC BAA-250 / LMG 18311).